Reading from the N-terminus, the 304-residue chain is Pyridoxal 5'-phosphate synthase subunit PdxS (304 aa).

D-ribose 5-phosphate is bound at residue aspartate 34. The active-site Schiff-base intermediate with D-ribose 5-phosphate is the lysine 91. Glycine 163 is a binding site for D-ribose 5-phosphate. D-glyceraldehyde 3-phosphate is bound at residue arginine 175. Residues glycine 224 and 245 to 246 (GS) contribute to the D-ribose 5-phosphate site.

Belongs to the PdxS/SNZ family. In terms of assembly, in the presence of PdxT, forms a dodecamer of heterodimers.

It carries out the reaction aldehydo-D-ribose 5-phosphate + D-glyceraldehyde 3-phosphate + L-glutamine = pyridoxal 5'-phosphate + L-glutamate + phosphate + 3 H2O + H(+). The protein operates within cofactor biosynthesis; pyridoxal 5'-phosphate biosynthesis. Its function is as follows. Catalyzes the formation of pyridoxal 5'-phosphate from ribose 5-phosphate (RBP), glyceraldehyde 3-phosphate (G3P) and ammonia. The ammonia is provided by the PdxT subunit. Can also use ribulose 5-phosphate and dihydroxyacetone phosphate as substrates, resulting from enzyme-catalyzed isomerization of RBP and G3P, respectively. This chain is Pyridoxal 5'-phosphate synthase subunit PdxS, found in Cutibacterium acnes (strain DSM 16379 / KPA171202) (Propionibacterium acnes).